A 182-amino-acid polypeptide reads, in one-letter code: ATP synthase subunit delta (182 aa).

Belongs to the ATPase delta chain family. F-type ATPases have 2 components, F(1) - the catalytic core - and F(0) - the membrane proton channel. F(1) has five subunits: alpha(3), beta(3), gamma(1), delta(1), epsilon(1). F(0) has three main subunits: a(1), b(2) and c(10-14). The alpha and beta chains form an alternating ring which encloses part of the gamma chain. F(1) is attached to F(0) by a central stalk formed by the gamma and epsilon chains, while a peripheral stalk is formed by the delta and b chains.

Its subcellular location is the cell inner membrane. In terms of biological role, f(1)F(0) ATP synthase produces ATP from ADP in the presence of a proton or sodium gradient. F-type ATPases consist of two structural domains, F(1) containing the extramembraneous catalytic core and F(0) containing the membrane proton channel, linked together by a central stalk and a peripheral stalk. During catalysis, ATP synthesis in the catalytic domain of F(1) is coupled via a rotary mechanism of the central stalk subunits to proton translocation. Its function is as follows. This protein is part of the stalk that links CF(0) to CF(1). It either transmits conformational changes from CF(0) to CF(1) or is implicated in proton conduction. This Pseudothermotoga lettingae (strain ATCC BAA-301 / DSM 14385 / NBRC 107922 / TMO) (Thermotoga lettingae) protein is ATP synthase subunit delta.